The following is a 46-amino-acid chain: Endochitinase 1A (46 aa).

This sequence belongs to the glycosyl hydrolase 19 family. Chitinase class I subfamily.

It carries out the reaction Random endo-hydrolysis of N-acetyl-beta-D-glucosaminide (1-&gt;4)-beta-linkages in chitin and chitodextrins.. Its function is as follows. Defense against chitin-containing fungal and bacterial pathogens. This chain is Endochitinase 1A, found in Arachis hypogaea (Peanut).